The primary structure comprises 360 residues: Aminomethyltransferase (360 aa).

The protein belongs to the GcvT family. In terms of assembly, the glycine cleavage system is composed of four proteins: P, T, L and H.

The catalysed reaction is N(6)-[(R)-S(8)-aminomethyldihydrolipoyl]-L-lysyl-[protein] + (6S)-5,6,7,8-tetrahydrofolate = N(6)-[(R)-dihydrolipoyl]-L-lysyl-[protein] + (6R)-5,10-methylene-5,6,7,8-tetrahydrofolate + NH4(+). Its function is as follows. The glycine cleavage system catalyzes the degradation of glycine. The polypeptide is Aminomethyltransferase (Methylococcus capsulatus (strain ATCC 33009 / NCIMB 11132 / Bath)).